The following is a 199-amino-acid chain: Small ribosomal subunit protein uS4 (199 aa).

The S4 RNA-binding domain occupies 91-151 (SRLDNLVYRF…EKSKNVKAIA (61 aa)).

Belongs to the universal ribosomal protein uS4 family. In terms of assembly, part of the 30S ribosomal subunit. Contacts protein S5. The interaction surface between S4 and S5 is involved in control of translational fidelity.

Its function is as follows. One of the primary rRNA binding proteins, it binds directly to 16S rRNA where it nucleates assembly of the body of the 30S subunit. Functionally, with S5 and S12 plays an important role in translational accuracy. The polypeptide is Small ribosomal subunit protein uS4 (Exiguobacterium sp. (strain ATCC BAA-1283 / AT1b)).